A 1522-amino-acid polypeptide reads, in one-letter code: Paired amphipathic helix protein pst1 (1522 aa).

Positions 139-174 (TILSSTDSNIPRPGTVKSSASPFVPNQNPSAPPPPP) are disordered. In terms of domain architecture, PAH 1 spans 178-248 (RQLNVTDALS…QGFNTFLPPG (71 aa)). Residues 307 to 339 (QSSASHPVLQPPAPSTLQFNPSPSPAAPSYPPV) form a disordered region. The span at 328 to 337 (SPSPAAPSYP) shows a compositional bias: pro residues. The region spanning 345–415 (QAADLDQAIN…EEFKRFLPDV (71 aa)) is the PAH 2 domain. 3 disordered regions span residues 422 to 504 (ETQD…AFNV), 928 to 968 (AREN…DESS), and 1343 to 1522 (SGKA…KDDL). The span at 426–441 (KSTVVPQESATATPKR) shows a compositional bias: polar residues. Residue serine 442 is modified to Phosphoserine. Residues 442–468 (SPSATPTSALPPIGKFAPPTTAKAQPA) show a composition bias toward low complexity. Residue threonine 446 is modified to Phosphothreonine. Positions 504 to 576 (VPIAQNKNPS…NWLKDLVKYN (73 aa)) constitute a PAH 3 domain. The segment covering 928–960 (ARENRSSVKEDYVSESTERTPDASEIDEHISEH) has biased composition (basic and acidic residues). Over residues 1385-1398 (GKSSVTRGNKTNLK) the composition is skewed to polar residues. The span at 1403-1432 (RNNDDSSNKINLSEKEKEKESIEDEEKNRE) shows a compositional bias: basic and acidic residues. Serine 1443 is modified (phosphoserine). Residues 1461 to 1474 (TSSHRPERSSEKKS) are compositionally biased toward basic and acidic residues. A compositionally biased stretch (polar residues) spans 1478-1487 (VFTSVKQTAE). Positions 1488–1522 (NDADNEDDKTDMDDQTEETLDADNTMEEEPSKDDL) are enriched in acidic residues.

The protein resides in the nucleus. In terms of biological role, has a role in modulating the nuclear import of TF1 virus-like particles. Essential for viability. The chain is Paired amphipathic helix protein pst1 (pst1) from Schizosaccharomyces pombe (strain 972 / ATCC 24843) (Fission yeast).